Here is a 574-residue protein sequence, read N- to C-terminus: K(+)/H(+) antiporter NhaP2 (574 aa).

Helical transmembrane passes span 6–26, 34–54, 58–78, 87–107, 109–129, 173–193, 196–216, 219–239, 242–262, 271–291, 299–319, 335–355, and 359–379; these read INSFFLIGALLAAVSVLLSPV, ILLIFLAVGILAGEDGPGGIL, YSTAYLVSNLALAIILLDGGM, VALWPALSLATFGVAITTSIT, VMAAWLFDLHWLQGLLVGAIV, IAILGNVDAELSASFMLISFI, FGLGIFLGLGGGWLLWKLVNL, LAEGLYSILVLSGGLMIYAAS, LGGSGILSIYLVGLFLGNKPT, VLDGMTWVSQIGMFLVLGLLL, IWLPGLALAFGMILFARPLAV, WFISWVGLRGAVPIILAVFPM, and LPGAQLYFNLAFFVVLVSLLV. One can recognise an RCK C-terminal domain in the interval 405-486; it reads SGVEIYPSSE…LEALSNLFSQ (82 aa).

The protein belongs to the monovalent cation:proton antiporter 1 (CPA1) transporter (TC 2.A.36) family. NhaP2 subfamily.

It localises to the cell inner membrane. It catalyses the reaction K(+)(in) + H(+)(out) = K(+)(out) + H(+)(in). Functionally, k(+)/H(+) antiporter that extrudes potassium in exchange for external protons and maintains the internal concentration of potassium under toxic levels. The chain is K(+)/H(+) antiporter NhaP2 from Shewanella sp. (strain MR-7).